Reading from the N-terminus, the 983-residue chain is Ephrin type-A receptor 3 (983 aa).

The first 20 residues, 1–20, serve as a signal peptide directing secretion; the sequence is MDCHLSILVLLGCCVLSCSG. At 21–540 the chain is on the extracellular side; the sequence is ELSPQPSNEV…SFSISGENSH (520 aa). An Eph LBD domain is found at 29–206; the sequence is EVNLLDSKTI…YFKKCPFTVK (178 aa). Asn-231, Asn-336, Asn-390, Asn-403, and Asn-492 each carry an N-linked (GlcNAc...) asparagine glycan. Fibronectin type-III domains are found at residues 324–434 and 435–530; these read PPSA…TNQA and APSP…TSPD. Residues 541 to 564 traverse the membrane as a helical segment; it reads VVMIAISAAVAIIVLTVVTYVLVG. Over 565–983 the chain is Cytoplasmic; that stretch reads RFCGYHKSKH…TQSKNGPVPV (419 aa). Phosphotyrosine; by autocatalysis occurs at positions 596 and 602. Residues 621–882 enclose the Protein kinase domain; that stretch reads ISIDKVVGAG…QIVSILDKLI (262 aa). ATP is bound by residues 628–633, Lys-653, and 700–706; these read GAGEFG and EYMENGS. Position 701 is a phosphotyrosine; by autocatalysis (Tyr-701). The active-site Proton acceptor is Asp-746. 750–751 contributes to the ATP binding site; the sequence is RN. The residue at position 779 (Tyr-779) is a Phosphotyrosine; by autocatalysis. Residues 911 to 975 form the SAM domain; it reads ATFHTTGDWL…ISTIKALETQ (65 aa). At Tyr-937 the chain carries Phosphotyrosine. The PDZ-binding motif lies at 981–983; sequence VPV.

It belongs to the protein kinase superfamily. Tyr protein kinase family. Ephrin receptor subfamily. Heterotetramer upon binding of the ligand. The heterotetramer is composed of an ephrin dimer and a receptor dimer. Oligomerization is probably required to induce biological responses. Forms a ternary EFNA5-EPHA3-ADAM10 complex mediating EFNA5 extracellular domain shedding by ADAM10 which regulates the EFNA5-EPHA3 complex internalization and function. Interacts (phosphorylated) with PTPN1; dephosphorylates EPHA3 and may regulate its trafficking and function. Interacts (phosphorylated) with CRK; mediates EFNA5-EPHA3 signaling through RHOA GTPase activation. Interacts with NCK1 (via SH2 domain); mediates EFNA5-EPHA3 signaling. Autophosphorylates upon activation by EFNA5. Phosphorylation on Tyr-602 mediates interaction with NCK1. Dephosphorylated by PTPN1. In terms of tissue distribution, greatest levels of expression occurring in the brain, also detected in testis. Expressed in myogenic progenitor cells.

Its subcellular location is the cell membrane. The protein localises to the secreted. It carries out the reaction L-tyrosyl-[protein] + ATP = O-phospho-L-tyrosyl-[protein] + ADP + H(+). Functionally, receptor tyrosine kinase which binds promiscuously membrane-bound ephrin family ligands residing on adjacent cells, leading to contact-dependent bidirectional signaling into neighboring cells. The signaling pathway downstream of the receptor is referred to as forward signaling while the signaling pathway downstream of the ephrin ligand is referred to as reverse signaling. Highly promiscuous for ephrin-A ligands it binds preferentially EFNA5. Upon activation by EFNA5 regulates cell-cell adhesion, cytoskeletal organization and cell migration. Plays a role in cardiac cells migration and differentiation and regulates the formation of the atrioventricular canal and septum during development probably through activation by EFNA1. Involved in the retinotectal mapping of neurons. May also control the segregation but not the guidance of motor and sensory axons during neuromuscular circuit development. This chain is Ephrin type-A receptor 3 (Epha3), found in Mus musculus (Mouse).